The following is a 263-amino-acid chain: Shikimate dehydrogenase (NADP(+)) (263 aa).

Residues 16–18 (SKS) and Thr65 contribute to the shikimate site. Lys69 functions as the Proton acceptor in the catalytic mechanism. Residues Asn90 and Asp105 each coordinate shikimate. Residues 125-129 (GSGGS) and Leu208 each bind NADP(+). Tyr210 serves as a coordination point for shikimate. Position 230 (Gly230) interacts with NADP(+).

It belongs to the shikimate dehydrogenase family. Homodimer.

The catalysed reaction is shikimate + NADP(+) = 3-dehydroshikimate + NADPH + H(+). It participates in metabolic intermediate biosynthesis; chorismate biosynthesis; chorismate from D-erythrose 4-phosphate and phosphoenolpyruvate: step 4/7. Its activity is regulated as follows. Inhibited by curcumin, 3-(2-naphthyloxy)-4-oxo-2-(trifluoromethyl)-4H-chromen-7-yl 3-chlorobenzoate, butyl 2-{[3-(2-naphthyloxy)-4-oxo-2-(trifluoromethyl)-4H-chromen-7-yl]oxy}propanoate, 2-({2-[(2-{[2-(2,3-dimethylanilino)-2-oxoethyl]sulfanyl}-1,3-benzothiazol-6-yl)amino]-2-oxoethyl}sulfanyl)-N-(2-naphthyl)acetamide, and maesaquinone diacetate. Involved in the biosynthesis of the chorismate, which leads to the biosynthesis of aromatic amino acids. Catalyzes the reversible NADPH linked reduction of 3-dehydroshikimate (DHSA) to yield shikimate (SA). It can also use NAD to oxidize shikimate. The sequence is that of Shikimate dehydrogenase (NADP(+)) from Helicobacter pylori (Campylobacter pylori).